We begin with the raw amino-acid sequence, 753 residues long: 5-methyltetrahydropteroyltriglutamate--homocysteine methyltransferase (753 aa).

5-methyltetrahydropteroyltri-L-glutamate-binding positions include 17-20 and Lys117; that span reads RELK. L-homocysteine-binding positions include 431-433 and Glu484; that span reads IGS. L-methionine-binding positions include 431-433 and Glu484; that span reads IGS. 5-methyltetrahydropteroyltri-L-glutamate is bound by residues 515–516 and Trp561; that span reads RC. Position 599 (Asp599) interacts with L-homocysteine. Residue Asp599 coordinates L-methionine. Glu605 provides a ligand contact to 5-methyltetrahydropteroyltri-L-glutamate. Residues His641, Cys643, and Glu665 each coordinate Zn(2+). The active-site Proton donor is His694. Cys726 serves as a coordination point for Zn(2+).

Belongs to the vitamin-B12 independent methionine synthase family. The cofactor is Zn(2+).

The catalysed reaction is 5-methyltetrahydropteroyltri-L-glutamate + L-homocysteine = tetrahydropteroyltri-L-glutamate + L-methionine. It functions in the pathway amino-acid biosynthesis; L-methionine biosynthesis via de novo pathway; L-methionine from L-homocysteine (MetE route): step 1/1. Its function is as follows. Catalyzes the transfer of a methyl group from 5-methyltetrahydrofolate to homocysteine resulting in methionine formation. This is 5-methyltetrahydropteroyltriglutamate--homocysteine methyltransferase from Escherichia coli O157:H7.